A 211-amino-acid chain; its full sequence is Endonuclease III (211 aa).

The HhH domain occupies 108–127 (RAALEALPGVGRKTANVVLN). 4 residues coordinate [4Fe-4S] cluster: cysteine 187, cysteine 194, cysteine 197, and cysteine 203.

The protein belongs to the Nth/MutY family. It depends on [4Fe-4S] cluster as a cofactor.

The catalysed reaction is 2'-deoxyribonucleotide-(2'-deoxyribose 5'-phosphate)-2'-deoxyribonucleotide-DNA = a 3'-end 2'-deoxyribonucleotide-(2,3-dehydro-2,3-deoxyribose 5'-phosphate)-DNA + a 5'-end 5'-phospho-2'-deoxyribonucleoside-DNA + H(+). Its function is as follows. DNA repair enzyme that has both DNA N-glycosylase activity and AP-lyase activity. The DNA N-glycosylase activity releases various damaged pyrimidines from DNA by cleaving the N-glycosidic bond, leaving an AP (apurinic/apyrimidinic) site. The AP-lyase activity cleaves the phosphodiester bond 3' to the AP site by a beta-elimination, leaving a 3'-terminal unsaturated sugar and a product with a terminal 5'-phosphate. This Escherichia coli O6:H1 (strain CFT073 / ATCC 700928 / UPEC) protein is Endonuclease III.